A 379-amino-acid polypeptide reads, in one-letter code: Succinate--CoA ligase [ADP-forming] subunit beta (379 aa).

The ATP-grasp domain occupies 9 to 236 (KEIARKYGIE…GRDATPYEKV (228 aa)). Residues Lys46, 53 to 55 (GRG), Glu92, Val95, and Glu100 each bind ATP. Mg(2+)-binding residues include Asn192 and Asp206. Substrate is bound by residues Asn256 and 313–315 (GIT).

The protein belongs to the succinate/malate CoA ligase beta subunit family. In terms of assembly, heterotetramer of two alpha and two beta subunits. The cofactor is Mg(2+).

The catalysed reaction is succinate + ATP + CoA = succinyl-CoA + ADP + phosphate. It carries out the reaction GTP + succinate + CoA = succinyl-CoA + GDP + phosphate. The protein operates within carbohydrate metabolism; tricarboxylic acid cycle; succinate from succinyl-CoA (ligase route): step 1/1. Succinyl-CoA synthetase functions in the citric acid cycle (TCA), coupling the hydrolysis of succinyl-CoA to the synthesis of either ATP or GTP and thus represents the only step of substrate-level phosphorylation in the TCA. The beta subunit provides nucleotide specificity of the enzyme and binds the substrate succinate, while the binding sites for coenzyme A and phosphate are found in the alpha subunit. This chain is Succinate--CoA ligase [ADP-forming] subunit beta, found in Desulfurococcus amylolyticus (strain DSM 18924 / JCM 16383 / VKM B-2413 / 1221n) (Desulfurococcus kamchatkensis).